The following is a 135-amino-acid chain: Small ribosomal subunit protein bS16 (135 aa).

Residues Thr106–Ala135 are disordered. Positions Arg109–Ala122 are enriched in basic residues.

The protein belongs to the bacterial ribosomal protein bS16 family.

The protein is Small ribosomal subunit protein bS16 of Chlorobium phaeobacteroides (strain DSM 266 / SMG 266 / 2430).